A 188-amino-acid polypeptide reads, in one-letter code: NADH-quinone oxidoreductase subunit I (188 aa).

2 4Fe-4S ferredoxin-type domains span residues 44 to 74 (LNRY…VEGA) and 90 to 119 (RVYQ…MTNE). 8 residues coordinate [4Fe-4S] cluster: Cys54, Cys57, Cys60, Cys64, Cys99, Cys102, Cys105, and Cys109. The segment at 144-188 (GMVDSPHPMAPGTTAEDYYRGTVTGGAAPASQDEPEADDTAGDRP) is disordered. Positions 176-188 (DEPEADDTAGDRP) are enriched in acidic residues.

The protein belongs to the complex I 23 kDa subunit family. NDH-1 is composed of 14 different subunits. Subunits NuoA, H, J, K, L, M, N constitute the membrane sector of the complex. The cofactor is [4Fe-4S] cluster.

It localises to the cell membrane. It carries out the reaction a quinone + NADH + 5 H(+)(in) = a quinol + NAD(+) + 4 H(+)(out). Its function is as follows. NDH-1 shuttles electrons from NADH, via FMN and iron-sulfur (Fe-S) centers, to quinones in the respiratory chain. The immediate electron acceptor for the enzyme in this species is believed to be ubiquinone. Couples the redox reaction to proton translocation (for every two electrons transferred, four hydrogen ions are translocated across the cytoplasmic membrane), and thus conserves the redox energy in a proton gradient. In Rhodococcus opacus (strain B4), this protein is NADH-quinone oxidoreductase subunit I.